The following is a 493-amino-acid chain: Glutamyl-tRNA(Gln) amidotransferase subunit A (493 aa).

Catalysis depends on charge relay system residues Lys78 and Ser158. Ser182 (acyl-ester intermediate) is an active-site residue.

The protein belongs to the amidase family. GatA subfamily. Heterotrimer of A, B and C subunits.

It carries out the reaction L-glutamyl-tRNA(Gln) + L-glutamine + ATP + H2O = L-glutaminyl-tRNA(Gln) + L-glutamate + ADP + phosphate + H(+). Functionally, allows the formation of correctly charged Gln-tRNA(Gln) through the transamidation of misacylated Glu-tRNA(Gln) in organisms which lack glutaminyl-tRNA synthetase. The reaction takes place in the presence of glutamine and ATP through an activated gamma-phospho-Glu-tRNA(Gln). In Rickettsia felis (strain ATCC VR-1525 / URRWXCal2) (Rickettsia azadi), this protein is Glutamyl-tRNA(Gln) amidotransferase subunit A.